Here is a 130-residue protein sequence, read N- to C-terminus: Small ribosomal subunit protein uS8 (130 aa).

Belongs to the universal ribosomal protein uS8 family. As to quaternary structure, part of the 30S ribosomal subunit. Contacts proteins S5 and S12.

Its function is as follows. One of the primary rRNA binding proteins, it binds directly to 16S rRNA central domain where it helps coordinate assembly of the platform of the 30S subunit. The sequence is that of Small ribosomal subunit protein uS8 from Hahella chejuensis (strain KCTC 2396).